Consider the following 963-residue polypeptide: Protocadherin alpha-C1 (963 aa).

Positions 1–18 (MVGWGVAVLCLWVSCGAA) are cleaved as a signal peptide. 5 Cadherin domains span residues 19-124 (AGQL…SPLF), 125-233 (PAGD…APVF), 234-340 (ERSV…APEL), 349-445 (VPED…TPSF), and 446-555 (PQPQ…YPVI). The Extracellular segment spans residues 19-683 (AGQLEYSVPE…GGQLSAQNLY (665 aa)). An N-linked (GlcNAc...) asparagine glycan is attached at N38. N-linked (GlcNAc...) asparagine glycans are attached at residues N248 and N274. N-linked (GlcNAc...) asparagine glycosylation is present at N562. The Cadherin 6 domain maps to 570-667 (VPRSARTGHL…NSVPQLLPDF (98 aa)). Residues 684-704 (LVIALACISFLFLGCLLFFVC) traverse the membrane as a helical segment. Residues 705-963 (TKLHQSPGCC…GNSTTDNSDQ (259 aa)) are Cytoplasmic-facing. 4 PXXP repeats span residues 812–815 (PRQP), 845–848 (PGGP), 886–889 (PGNP), and 904–907 (PGSP). Residues 812–907 (PRQPNPDWRY…PDKFIIPGSP (96 aa)) are 4 X 4 AA repeats of P-X-X-P. Positions 844–902 (GPGGPDQQWPTVSSATPEPEAGEVSPPVGAGVNSNSWTFKYGPGNPKQSGPGELPDKFI) are disordered. The tract at residues 914–963 (QEPANSQIDKSDFITFGKKEETKKKKKKKKGNKTQEKKEKGNSTTDNSDQ) is disordered. Basic and acidic residues predominate over residues 922-936 (DKSDFITFGKKEETK).

It localises to the cell membrane. In terms of biological role, potential calcium-dependent cell-adhesion protein. May be involved in the establishment and maintenance of specific neuronal connections in the brain. This chain is Protocadherin alpha-C1 (PCDHAC1), found in Pan troglodytes (Chimpanzee).